The primary structure comprises 340 residues: Oxygen-dependent coproporphyrinogen-III oxidase (340 aa).

Residues 1–14 (MTVSPTTQPQTNHS) are compositionally biased toward polar residues. The segment at 1 to 22 (MTVSPTTQPQTNHSLPPADAKQ) is disordered. Serine 109 is a substrate binding site. Residues histidine 113 and histidine 123 each coordinate a divalent metal cation. Residue histidine 123 is the Proton donor of the active site. 125–127 (NYR) lines the substrate pocket. Residues histidine 157 and histidine 187 each contribute to the a divalent metal cation site. Positions 278 to 313 (YVEFNLVYDRGTIFGLQTNGRTESILMSLPPLVRWQ) are important for dimerization. 296–298 (NGR) is a substrate binding site.

It belongs to the aerobic coproporphyrinogen-III oxidase family. Homodimer. A divalent metal cation serves as cofactor.

The protein localises to the cytoplasm. The catalysed reaction is coproporphyrinogen III + O2 + 2 H(+) = protoporphyrinogen IX + 2 CO2 + 2 H2O. The protein operates within porphyrin-containing compound metabolism; protoporphyrin-IX biosynthesis; protoporphyrinogen-IX from coproporphyrinogen-III (O2 route): step 1/1. Its function is as follows. Involved in the heme and chlorophyll biosynthesis. Catalyzes the aerobic oxidative decarboxylation of propionate groups of rings A and B of coproporphyrinogen-III to yield the vinyl groups in protoporphyrinogen-IX. This is Oxygen-dependent coproporphyrinogen-III oxidase from Synechocystis sp. (strain ATCC 27184 / PCC 6803 / Kazusa).